A 1012-amino-acid chain; its full sequence is Isoleucine--tRNA ligase, mitochondrial (1012 aa).

The N-terminal 48 residues, 1–48 (MHWGLCPRGPGAAAVAAAGSFWGPARLPSRLGCLGMTRRLVVRSVAGA), are a transit peptide targeting the mitochondrion. Lys56 carries the post-translational modification N6-succinyllysine. An N6-acetyllysine; alternate modification is found at Lys74. Lys74 is subject to N6-succinyllysine; alternate. Positions 116–126 (PYANGDPHVGH) match the 'HIGH' region motif. An N6-succinyllysine modification is found at Lys194. N6-acetyllysine is present on Lys233. Lys241 bears the N6-acetyllysine; alternate mark. N6-succinyllysine; alternate is present on Lys241. An N6-succinyllysine mark is found at Lys479 and Lys500. Residues Lys664 and Lys667 each coordinate ATP. The 'KMSKS' region signature appears at 664-668 (KMSKS). Position 725 is an N6-acetyllysine (Lys725). Residues Lys775 and Lys781 each carry the N6-acetyllysine; alternate modification. An N6-succinyllysine; alternate mark is found at Lys775 and Lys781.

Belongs to the class-I aminoacyl-tRNA synthetase family.

Its subcellular location is the mitochondrion matrix. It carries out the reaction tRNA(Ile) + L-isoleucine + ATP = L-isoleucyl-tRNA(Ile) + AMP + diphosphate. In terms of biological role, aminoacyl-tRNA synthetase that catalyzes the specific attachment of isoleucine to its cognate tRNA (tRNA(Ile)). This Mus musculus (Mouse) protein is Isoleucine--tRNA ligase, mitochondrial.